The sequence spans 1574 residues: Plexin-C1 (1574 aa).

A signal peptide spans 1–34; that stretch reads MEVSRRKTPPRPPYPAAPLPLIAYLLALAAPARG. A Sema domain is found at 35–452; it reads ADEPVWRSEQ…AGKEVRRIPV (418 aa). Over 35 to 950 the chain is Extracellular; it reads ADEPVWRSEQ…YVEQESVPST (916 aa). An intrachain disulfide couples Cys-64 to Cys-87. Residues Asn-86, Asn-143, and Asn-149 are each glycosylated (N-linked (GlcNAc...) asparagine). A disulfide bridge links Cys-156 with Cys-194. An N-linked (GlcNAc...) asparagine glycan is attached at Asn-252. Cys-283 and Cys-329 are disulfide-bonded. Asn-386 and Asn-407 each carry an N-linked (GlcNAc...) asparagine glycan. Cystine bridges form between Cys-455–Cys-472, Cys-461–Cys-506, Cys-464–Cys-481, and Cys-475–Cys-487. Asn-694, Asn-773, and Asn-802 each carry an N-linked (GlcNAc...) asparagine glycan. The helical transmembrane segment at 951–971 threads the bilayer; that stretch reads WYFLIALPILLAIVIVVAVVV. The Cytoplasmic portion of the chain corresponds to 972–1574; that stretch reads TRYKSKELSR…FDEKKKCKWM (603 aa). Position 984 is a phosphoserine (Ser-984).

It belongs to the plexin family. As to quaternary structure, monomer. Homodimer. Interacts with SEMA7A. Detected on dendritic cells, skin Langerhans cells and neutrophils (at protein level).

Its subcellular location is the membrane. Its function is as follows. Receptor for SEMA7A, for vaccinia virus semaphorin A39R and for herpesvirus Sema protein. Binding of semaphorins triggers cellular responses leading to the rearrangement of the cytoskeleton and to secretion of IL6 and IL8. This chain is Plexin-C1 (Plxnc1), found in Mus musculus (Mouse).